Here is a 1461-residue protein sequence, read N- to C-terminus: DNA topoisomerase 2 (1461 aa).

Residues 1–17 (MSESESDYFTDGSEDDF) show a composition bias toward acidic residues. The interval 1 to 61 (MSESESDYFT…TPKPTNASET (61 aa)) is disordered. The segment covering 41-52 (TNSTVSSSRSST) has biased composition (low complexity). ATP contacts are provided by residues Asn-120, Asn-149, 177-179 (SSN), and 190-197 (GRNGFGAK). The interaction with DNA stretch occupies residues 382–389 (SKKEKGKK). 418-420 (QTK) contacts ATP. Residues 498 to 614 (CTLILTEGLS…GLLDIPGFLL (117 aa)) form the Toprim domain. The Mg(2+) site is built by Glu-504, Asp-583, and Asp-585. In terms of domain architecture, Topo IIA-type catalytic spans 752–1226 (IPSVLDGFKP…SAKDLWNQDL (475 aa)). Tyr-842 (O-(5'-phospho-DNA)-tyrosine intermediate) is an active-site residue. Residues 1024-1033 (KLVSSLSLAN) are interaction with DNA. Disordered regions lie at residues 1122-1155 (DGKP…DVGN) and 1244-1461 (RESL…IVDE). Positions 1133-1153 (LTGDDADEEEETQEQEGDEDV) are enriched in acidic residues. The span at 1251–1261 (GKKKSTKRRAK) shows a compositional bias: basic residues. Composition is skewed to basic and acidic residues over residues 1274-1283 (VKVEPKEKKS) and 1406-1417 (DKPEPKERRTRE). Acidic residues predominate over residues 1434–1461 (DSDDEDEDEEDDIVMSDGDDDDDFIVDE).

It belongs to the type II topoisomerase family. As to quaternary structure, homodimer. It depends on Mg(2+) as a cofactor. Mn(2+) is required as a cofactor. Ca(2+) serves as cofactor.

It is found in the nucleus. The enzyme catalyses ATP-dependent breakage, passage and rejoining of double-stranded DNA.. Control of topological states of DNA by transient breakage and subsequent rejoining of DNA strands. Topoisomerase II makes double-strand breaks. The chain is DNA topoisomerase 2 (TOP2) from Candida albicans (Yeast).